A 262-amino-acid polypeptide reads, in one-letter code: Octopine permease ATP-binding protein P (262 aa).

In terms of domain architecture, ABC transporter spans 9–254 (VQLKDIRKNF…PRTDRFRQFL (246 aa)). 41 to 48 (GSSGSGKS) contributes to the ATP binding site.

Belongs to the ABC transporter superfamily.

It is found in the cell inner membrane. In terms of biological role, component of the octopine active transport system probably consisting of four subunits: Q, M, P and T. The chain is Octopine permease ATP-binding protein P (occP) from Rhizobium radiobacter (Agrobacterium tumefaciens).